The sequence spans 451 residues: Phosphoglucosamine mutase (451 aa).

Serine 102 serves as the catalytic Phosphoserine intermediate. Residues serine 102, aspartate 244, aspartate 246, and aspartate 248 each contribute to the Mg(2+) site. Serine 102 carries the post-translational modification Phosphoserine.

Belongs to the phosphohexose mutase family. Requires Mg(2+) as cofactor. Activated by phosphorylation.

It carries out the reaction alpha-D-glucosamine 1-phosphate = D-glucosamine 6-phosphate. Its function is as follows. Catalyzes the conversion of glucosamine-6-phosphate to glucosamine-1-phosphate. This chain is Phosphoglucosamine mutase, found in Lawsonia intracellularis (strain PHE/MN1-00).